Consider the following 357-residue polypeptide: Arginine kinase (357 aa).

Alanine 2 carries the N-acetylalanine modification. The region spanning 9–91 (KLEEGFKKLE…FDPIIEDYHK (83 aa)) is the Phosphagen kinase N-terminal domain. 64-68 (GVGVY) lines the L-arginine pocket. Positions 119-356 (FVISTRVRCG…LELIKIEKEM (238 aa)) constitute a Phosphagen kinase C-terminal domain. ATP is bound by residues 122-126 (STRVR) and histidine 185. Glutamate 225 serves as a coordination point for L-arginine. An ATP-binding site is contributed by arginine 229. Cysteine 271 provides a ligand contact to L-arginine. Residues 280 to 284 (RASVH) and 309 to 314 (RGTRGE) contribute to the ATP site. Residue glutamate 314 coordinates L-arginine.

The protein belongs to the ATP:guanido phosphotransferase family.

It carries out the reaction L-arginine + ATP = N(omega)-phospho-L-arginine + ADP + H(+). The chain is Arginine kinase from Callinectes sapidus (Blue crab).